Consider the following 165-residue polypeptide: Destrin (165 aa).

A2 is modified (N-acetylalanine). S3 carries the phosphoserine modification. One can recognise an ADF-H domain in the interval 4-153 (GVQVADEVCR…NRTSIAEKLG (150 aa)). K19 carries the N6-acetyllysine modification. A Nuclear localization signal motif is present at residues 30-34 (KKRKK).

Belongs to the actin-binding proteins ADF family. In terms of processing, ISGylated.

Functionally, actin-depolymerizing protein. Severs actin filaments (F-actin) and binds to actin monomers (G-actin). Acts in a pH-independent manner. This is Destrin (Dstn) from Rattus norvegicus (Rat).